Here is a 233-residue protein sequence, read N- to C-terminus: Superoxide dismutase [Mn] 3.3, mitochondrial (233 aa).

Residues 1–29 constitute a mitochondrion transit peptide; it reads MALRTLASKNALSFALGGAARPSAESARG. Mn(2+) contacts are provided by His-57, His-105, Asp-194, and His-198.

Belongs to the iron/manganese superoxide dismutase family. As to quaternary structure, homotetramer. It depends on Mn(2+) as a cofactor. In terms of tissue distribution, predominantly expressed in the embryo late in embryogenesis.

Its subcellular location is the mitochondrion matrix. The enzyme catalyses 2 superoxide + 2 H(+) = H2O2 + O2. Functionally, destroys superoxide anion radicals which are normally produced within the cells and which are toxic to biological systems. This Zea mays (Maize) protein is Superoxide dismutase [Mn] 3.3, mitochondrial (SODA.2).